Here is a 249-residue protein sequence, read N- to C-terminus: Basigin (249 aa).

In terms of domain architecture, Ig-like C2-type spans 1 to 82; it reads AAGTIQTSVN…VGRSNIVVEG (82 aa). The Extracellular portion of the chain corresponds to 1–187; the sequence is AAGTIQTSVN…MTLRVRSRLA (187 aa). 2 disulfides stabilise this stretch: Cys20–Cys66 and Cys105–Cys165. 3 N-linked (GlcNAc...) asparagine glycosylation sites follow: Asn23, Asn132, and Asn166. An Ig-like V-type domain is found at 84 to 179; the sequence is PRIKVGKKSE…TQGSVQEIMT (96 aa). Residues 188 to 208 form a helical membrane-spanning segment; the sequence is ALWPFLGIVAEVLVLVTIIFI. Over 209-249 the chain is Cytoplasmic; the sequence is YEKRRKPDQTLDEDDPGAAPLKGSGHHMNDKDKNVRQRNAT. The disordered stretch occupies residues 216–249; that stretch reads DQTLDEDDPGAAPLKGSGHHMNDKDKNVRQRNAT. Thr218 is modified (phosphothreonine). Ser232 bears the Phosphoserine mark.

Homooligomer. Interacts with VEGFA, KDR/VEGFR2, PPIA/CYPA, SLC16A12, SLC16A11, ATP1B2, MAG, L1CAM and AJAP1. Interacts with SLC16A3; interaction mediates SLC16A3 targeting to the plasma membrane. Interacts with SLC16A1; interaction mediates SLC16A1 targeting to the plasma membrane. Interacts with PPIL2; regulates BSG transport to the cell membrane. Interacts with XKR8; promoting its localization at the cell membrane. Interacts with SLC16A6; this interaction mediates targeting to the plasma membrane.

It localises to the cell membrane. The protein localises to the endoplasmic reticulum membrane. Its subcellular location is the basolateral cell membrane. In terms of biological role, signaling receptor for cyclophilins, essential for PPIA/CYPA and PPIB/CYPB-dependent signaling related to chemotaxis and adhesion of immune cells. Plays an important role in targeting the monocarboxylate transporters SLC16A1/GLUT1, SLC16A3, SLC16A8, SLC16A11 and SLC16A12 to the plasma membrane. Acts as a coreceptor for vascular endothelial growth factor receptor 2 (KDR/VEGFR2) in endothelial cells enhancing its VEGFA-mediated activation and downstream signaling. Promotes angiogenesis through EPAS1/HIF2A-mediated up-regulation of VEGFA and KDR/VEGFR2 in endothelial cells. This chain is Basigin (BSG), found in Cricetulus griseus (Chinese hamster).